A 96-amino-acid polypeptide reads, in one-letter code: Large ribosomal subunit protein bL27 (96 aa).

The propeptide occupies 1–10 (MLLKLNIQLF).

The protein belongs to the bacterial ribosomal protein bL27 family. Post-translationally, the N-terminus is cleaved by ribosomal processing cysteine protease Prp.

This Phytoplasma mali (strain AT) protein is Large ribosomal subunit protein bL27.